Reading from the N-terminus, the 212-residue chain is MTDKIVTAEEMRHYDFYTINTIGIPSLVLMERAALAVRDEILHAFPIALKDVVVVAGSGNNGGDGIAIARLLHIAGVHVTILNIGNPQHASAEHQTQEKIAQYYQIPETSDLAVLNKATLIVDAMFGIGIDRAVKGAYADAINAINNTDAVVVAVDMPSGVNTDTGEVMGTAVRATTTVTFAYNKVGLTKNDGKDYAGNVVVANDMGTYAVD.

The YjeF N-terminal domain maps to 11–212; it reads MRHYDFYTIN…ANDMGTYAVD (202 aa). 60–64 provides a ligand contact to (6S)-NADPHX; the sequence is NNGGD. Residues Asn61 and Asp123 each contribute to the K(+) site. (6S)-NADPHX-binding positions include 127-133, Tyr138, and Asp156; that span reads GIGIDRA. K(+) is bound at residue Ser159.

This sequence belongs to the NnrE/AIBP family. The cofactor is K(+).

The catalysed reaction is (6R)-NADHX = (6S)-NADHX. The enzyme catalyses (6R)-NADPHX = (6S)-NADPHX. Its function is as follows. Catalyzes the epimerization of the S- and R-forms of NAD(P)HX, a damaged form of NAD(P)H that is a result of enzymatic or heat-dependent hydration. This is a prerequisite for the S-specific NAD(P)H-hydrate dehydratase to allow the repair of both epimers of NAD(P)HX. The chain is NAD(P)H-hydrate epimerase from Limosilactobacillus reuteri (strain DSM 20016) (Lactobacillus reuteri).